The following is a 427-amino-acid chain: Tyrosine--tRNA ligase (427 aa).

Tyr33 serves as a coordination point for L-tyrosine. The 'HIGH' region signature appears at 38–47 (PTAPSLHVGN). 2 residues coordinate L-tyrosine: Tyr168 and Gln172. The short motif at 228 to 232 (KFGKS) is the 'KMSKS' region element. Lys231 is an ATP binding site. The region spanning 358–426 (EHMLDLVAST…GKKHHYLIKV (69 aa)) is the S4 RNA-binding domain.

This sequence belongs to the class-I aminoacyl-tRNA synthetase family. TyrS type 1 subfamily. In terms of assembly, homodimer.

Its subcellular location is the cytoplasm. The enzyme catalyses tRNA(Tyr) + L-tyrosine + ATP = L-tyrosyl-tRNA(Tyr) + AMP + diphosphate + H(+). Functionally, catalyzes the attachment of tyrosine to tRNA(Tyr) in a two-step reaction: tyrosine is first activated by ATP to form Tyr-AMP and then transferred to the acceptor end of tRNA(Tyr). This chain is Tyrosine--tRNA ligase, found in Amoebophilus asiaticus (strain 5a2).